Reading from the N-terminus, the 586-residue chain is ATP-dependent lipid A-core flippase (586 aa).

Transmembrane regions (helical) follow at residues 25 to 45, 74 to 94, 163 to 183, and 264 to 284; these read AYFIISFIGFGVFAAMEAQLI, LWFVPISVVVLSIIRGIGAYF, VAWFLAMMLIINWKLTLAFIC, and VLHIVLALALAVTFYLIMILW. The region spanning 28–317 is the ABC transmembrane type-1 domain; it reads IISFIGFGVF…LTKINSIIQK (290 aa). The region spanning 349–583 is the ABC transporter domain; the sequence is VELKDVHFGY…SGVYANLYHS (235 aa). Position 382–389 (382–389) interacts with ATP; it reads GSSGSGKS.

Belongs to the ABC transporter superfamily. Lipid exporter (TC 3.A.1.106) family. As to quaternary structure, homodimer.

It localises to the cell inner membrane. It catalyses the reaction ATP + H2O + lipid A-core oligosaccharideSide 1 = ADP + phosphate + lipid A-core oligosaccharideSide 2.. Its function is as follows. Involved in lipopolysaccharide (LPS) biosynthesis. Translocates lipid A-core from the inner to the outer leaflet of the inner membrane. Transmembrane domains (TMD) form a pore in the inner membrane and the ATP-binding domain (NBD) is responsible for energy generation. This chain is ATP-dependent lipid A-core flippase, found in Saccharophagus degradans (strain 2-40 / ATCC 43961 / DSM 17024).